The following is a 439-amino-acid chain: uncharacterized protein (439 aa).

28–35 (GRRRIGKT) provides a ligand contact to ATP.

This is an uncharacterized protein from Methanocaldococcus jannaschii (strain ATCC 43067 / DSM 2661 / JAL-1 / JCM 10045 / NBRC 100440) (Methanococcus jannaschii).